Consider the following 343-residue polypeptide: MAIRLTHLRKPLAYSRSFDVCIPFFRSISSFEAVEKAIKCAVETKEYLRIPELVVSLKEPYQNSTLFSFLSAFQRHHRIRVIDEILQSFVPVRPRSLPKIVYSSLLTYCLQSSDPLPLSFAILQRTLRSGCLPNPQTHLLLSDAWLERRRGSQSVADIINEMKLIGYSPDTGTCNYLVSSLCAVDKLDEAIKVVEEMSAAGCIPDVESYGAVINSLCLARKTTDVVKIVKEMVSKAGISPRKGMLTKVAAALRANREIWKAIEMIEFVESRDYPVEFESYEVVVEGCLEVREYILAGKVVMRMTDRGFIPYIKVRQKVVERLINIGEWKLACTVRQRVSELRS.

PPR repeat units follow at residues 98-133 (PKIV…GCLP), 134-169 (NPQT…GYSP), 170-204 (DTGT…GCIP), 205-240 (DVES…GISP), 241-275 (RKGM…DYPV), and 276-310 (EFES…GFIP).

This sequence belongs to the PPR family. P subfamily.

The polypeptide is Pentatricopeptide repeat-containing protein At1g06270 (Arabidopsis thaliana (Mouse-ear cress)).